The following is a 632-amino-acid chain: tRNA uridine 5-carboxymethylaminomethyl modification enzyme MnmG (632 aa).

Position 15–20 (15–20 (GAGHAG)) interacts with FAD. A disordered region spans residues 205–231 (PRVDGNTIDYSKTQEEPGDKEPRHFSY). Residues 216 to 228 (KTQEEPGDKEPRH) show a composition bias toward basic and acidic residues. 276-290 (GPRYCPSIEDKVVRF) contributes to the NAD(+) binding site.

This sequence belongs to the MnmG family. In terms of assembly, homodimer. Heterotetramer of two MnmE and two MnmG subunits. It depends on FAD as a cofactor.

The protein localises to the cytoplasm. Functionally, NAD-binding protein involved in the addition of a carboxymethylaminomethyl (cmnm) group at the wobble position (U34) of certain tRNAs, forming tRNA-cmnm(5)s(2)U34. In Lactobacillus johnsonii (strain CNCM I-12250 / La1 / NCC 533), this protein is tRNA uridine 5-carboxymethylaminomethyl modification enzyme MnmG.